The chain runs to 79 residues: MSIEETVIELFDRLFMEDVSEMMDEDLFDAGVLDSLGTVELIVELESTFNIKVPISEFGRDDWNTVTKIVQGVEELQHA.

Residues 1 to 77 (MSIEETVIEL…KIVQGVEELQ (77 aa)) form the Carrier domain. Position 35 is an O-(pantetheine 4'-phosphoryl)serine (serine 35).

This sequence belongs to the DltC family. In terms of processing, 4'-phosphopantetheine is transferred from CoA to a specific serine of apo-DCP.

The protein resides in the cytoplasm. Its pathway is cell wall biogenesis; lipoteichoic acid biosynthesis. Functionally, carrier protein involved in the D-alanylation of lipoteichoic acid (LTA). The loading of thioester-linked D-alanine onto DltC is catalyzed by D-alanine--D-alanyl carrier protein ligase DltA. The DltC-carried D-alanyl group is further transferred to cell membrane phosphatidylglycerol (PG) by forming an ester bond, probably catalyzed by DltD. D-alanylation of LTA plays an important role in modulating the properties of the cell wall in Gram-positive bacteria, influencing the net charge of the cell wall. The chain is D-alanyl carrier protein from Streptococcus pyogenes serotype M1.